The following is a 708-amino-acid chain: Chaperonin-containing T-complex member BBS12 (708 aa).

The protein belongs to the TCP-1 chaperonin family. BBS12 subfamily. In terms of assembly, component of the chaperonin-containing T-complex (TRiC), a heterooligomeric complex of about 850 to 900 kDa that forms two stacked rings, 12 to 16 nm in diameter. Interacts with MKKS.

The protein resides in the cell projection. Its subcellular location is the cilium. Component of the chaperonin-containing T-complex (TRiC), a molecular chaperone complex that assists the folding of proteins upon ATP hydrolysis. As part of the TRiC complex may play a role in the assembly of BBSome, a complex involved in ciliogenesis regulating transports vesicles to the cilia. Involved in adipogenic differentiation. The protein is Chaperonin-containing T-complex member BBS12 (Bbs12) of Mus musculus (Mouse).